Reading from the N-terminus, the 76-residue chain is Protein RALF-like 26 (76 aa).

The first 22 residues, 1–22 (MKAWMIILLVICVAVVVEQSEA), serve as a signal peptide directing secretion. Cys37 and Cys46 are disulfide-bonded. Asn61 is a glycosylation site (N-linked (GlcNAc...) asparagine). Cys66 and Cys72 are oxidised to a cystine.

It belongs to the plant rapid alkalinization factor (RALF) family.

The protein resides in the secreted. In terms of biological role, cell signaling peptide that may regulate plant stress, growth, and development. Mediates a rapid alkalinization of extracellular space by mediating a transient increase in the cytoplasmic Ca(2+) concentration leading to a calcium-dependent signaling events through a cell surface receptor and a concomitant activation of some intracellular mitogen-activated protein kinases. The sequence is that of Protein RALF-like 26 (RALFL26) from Arabidopsis thaliana (Mouse-ear cress).